The sequence spans 219 residues: Ribose-5-phosphate isomerase A (219 aa).

Substrate is bound by residues 28-31 (SGST), 81-84 (DGAD), and 94-97 (KGGG). Catalysis depends on E103, which acts as the Proton acceptor. Residue K121 participates in substrate binding.

The protein belongs to the ribose 5-phosphate isomerase family. Homodimer.

It carries out the reaction aldehydo-D-ribose 5-phosphate = D-ribulose 5-phosphate. The protein operates within carbohydrate degradation; pentose phosphate pathway; D-ribose 5-phosphate from D-ribulose 5-phosphate (non-oxidative stage): step 1/1. In terms of biological role, catalyzes the reversible conversion of ribose-5-phosphate to ribulose 5-phosphate. The protein is Ribose-5-phosphate isomerase A of Pasteurella multocida (strain Pm70).